The primary structure comprises 334 residues: Glycerol-3-phosphate dehydrogenase [NAD(P)+] (334 aa).

NADPH-binding residues include tryptophan 13, arginine 33, and lysine 106. Lysine 106, glycine 137, and serine 139 together coordinate sn-glycerol 3-phosphate. Alanine 141 contributes to the NADPH binding site. Residues lysine 192, aspartate 245, serine 255, arginine 256, and asparagine 257 each contribute to the sn-glycerol 3-phosphate site. The active-site Proton acceptor is lysine 192. An NADPH-binding site is contributed by arginine 256. NADPH-binding residues include valine 280 and glutamate 282.

Belongs to the NAD-dependent glycerol-3-phosphate dehydrogenase family.

Its subcellular location is the cytoplasm. The enzyme catalyses sn-glycerol 3-phosphate + NAD(+) = dihydroxyacetone phosphate + NADH + H(+). The catalysed reaction is sn-glycerol 3-phosphate + NADP(+) = dihydroxyacetone phosphate + NADPH + H(+). It functions in the pathway membrane lipid metabolism; glycerophospholipid metabolism. In terms of biological role, catalyzes the reduction of the glycolytic intermediate dihydroxyacetone phosphate (DHAP) to sn-glycerol 3-phosphate (G3P), the key precursor for phospholipid synthesis. This Chlamydia abortus (strain DSM 27085 / S26/3) (Chlamydophila abortus) protein is Glycerol-3-phosphate dehydrogenase [NAD(P)+].